Reading from the N-terminus, the 759-residue chain is Catalase-peroxidase (759 aa).

The segment at 1-24 (MTQDKCPFKEQPSQPNFAGGGTSN) is disordered. Residues 96-242 (WHSAGTYRVF…LAAAHMGLIY (147 aa)) constitute a cross-link (tryptophyl-tyrosyl-methioninium (Trp-Tyr) (with M-268)). The Proton acceptor role is filled by His-97. The segment at residues 242-268 (YVNPEGPDGNPDPIAAAHDIRDTFGRM) is a cross-link (tryptophyl-tyrosyl-methioninium (Tyr-Met) (with W-96)). Heme b is bound at residue His-283.

It belongs to the peroxidase family. Peroxidase/catalase subfamily. As to quaternary structure, homodimer or homotetramer. Requires heme b as cofactor. Formation of the three residue Trp-Tyr-Met cross-link is important for the catalase, but not the peroxidase activity of the enzyme.

The protein resides in the cytoplasm. It catalyses the reaction H2O2 + AH2 = A + 2 H2O. It carries out the reaction 2 H2O2 = O2 + 2 H2O. In terms of biological role, bifunctional enzyme with both catalase and broad-spectrum peroxidase activity. This chain is Catalase-peroxidase, found in Neosartorya fischeri (strain ATCC 1020 / DSM 3700 / CBS 544.65 / FGSC A1164 / JCM 1740 / NRRL 181 / WB 181) (Aspergillus fischerianus).